The sequence spans 156 residues: Transcription elongation factor GreA (156 aa).

Positions 46 to 66 form a coiled coil; sequence AEYHSAREKQSFIEGRIKELE.

It belongs to the GreA/GreB family.

In terms of biological role, necessary for efficient RNA polymerase transcription elongation past template-encoded arresting sites. The arresting sites in DNA have the property of trapping a certain fraction of elongating RNA polymerases that pass through, resulting in locked ternary complexes. Cleavage of the nascent transcript by cleavage factors such as GreA or GreB allows the resumption of elongation from the new 3'terminus. GreA releases sequences of 2 to 3 nucleotides. In Ruegeria pomeroyi (strain ATCC 700808 / DSM 15171 / DSS-3) (Silicibacter pomeroyi), this protein is Transcription elongation factor GreA.